The following is a 482-amino-acid chain: Tektin (482 aa).

Coiled-coil stretches lie at residues 100-129, 171-204, 282-324, 376-407, and 441-478; these read CLAEVISEIAELLSTKKRLEERNGKVQAKI, ARAVAQVDREVAQLEAVRAKLEADLRDKTEALRV, RLNE…ALTS, VKVAAVDREIAALDATAAQLESNIADKDDALR, and RTQTLARIRELEASLTSARREREAMESSIRQLRDTMGG. The disordered stretch occupies residues 311–330; that stretch reads EQARAKGQRSALTSALDDKR. Arg462 is modified (asymmetric dimethylarginine).

This sequence belongs to the tektin family. Post-translationally, asymmetrically dimethylated at Arg-462 during flagellum resorption. Probably methylated by PRMT1.

The protein localises to the cytoplasm. It is found in the cytoskeleton. The protein resides in the flagellum axoneme. Its subcellular location is the flagellum basal body. Structural component of ciliary and flagellar microtubules. Plays a key role in the assembly or attachment of the inner dynein arm to microtubules in flagella and cilia. Forms filamentous polymers in the walls of ciliary and flagellar microtubules. The chain is Tektin from Chlamydomonas reinhardtii (Chlamydomonas smithii).